The following is a 265-amino-acid chain: 4-hydroxy-tetrahydrodipicolinate reductase (265 aa).

NAD(+) contacts are provided by residues 7 to 12 (GASGRM), Asp-33, 96 to 98 (GTT), and 120 to 123 (AANF). Residue His-153 is the Proton donor/acceptor of the active site. His-154 provides a ligand contact to (S)-2,3,4,5-tetrahydrodipicolinate. Lys-157 serves as the catalytic Proton donor. 163–164 (GT) contributes to the (S)-2,3,4,5-tetrahydrodipicolinate binding site.

This sequence belongs to the DapB family.

It localises to the cytoplasm. It catalyses the reaction (S)-2,3,4,5-tetrahydrodipicolinate + NAD(+) + H2O = (2S,4S)-4-hydroxy-2,3,4,5-tetrahydrodipicolinate + NADH + H(+). The enzyme catalyses (S)-2,3,4,5-tetrahydrodipicolinate + NADP(+) + H2O = (2S,4S)-4-hydroxy-2,3,4,5-tetrahydrodipicolinate + NADPH + H(+). Its pathway is amino-acid biosynthesis; L-lysine biosynthesis via DAP pathway; (S)-tetrahydrodipicolinate from L-aspartate: step 4/4. In terms of biological role, catalyzes the conversion of 4-hydroxy-tetrahydrodipicolinate (HTPA) to tetrahydrodipicolinate. In Cupriavidus necator (strain ATCC 17699 / DSM 428 / KCTC 22496 / NCIMB 10442 / H16 / Stanier 337) (Ralstonia eutropha), this protein is 4-hydroxy-tetrahydrodipicolinate reductase.